The following is a 188-amino-acid chain: dCTP deaminase (188 aa).

DCTP is bound by residues 111 to 116 (KSTYAR), 135 to 137 (TLE), Gln156, Tyr170, and Gln180. The active-site Proton donor/acceptor is Glu137.

It belongs to the dCTP deaminase family. Homotrimer.

The catalysed reaction is dCTP + H2O + H(+) = dUTP + NH4(+). It functions in the pathway pyrimidine metabolism; dUMP biosynthesis; dUMP from dCTP (dUTP route): step 1/2. Catalyzes the deamination of dCTP to dUTP. The protein is dCTP deaminase of Pseudomonas syringae pv. tomato (strain ATCC BAA-871 / DC3000).